Consider the following 666-residue polypeptide: MDKCSVGGLELTEQTPALLGNMAMATSLMDIGDSFGHPACPLVSRSRNSPVEDDDDVVFIESIQPPSVSAPAIADQRNFILASSKNEKPQGNYSVIPPPSRDLASQKGNISETIVIDDEEDIETNGGAEKNSSCFIEWGLPGTKNKTKDLDFSTSSLSRSKTKTGVRPFNPGRMNVAGDLFQNGEFATHHSPDSWISQSASFPRNQKQPGVDSLSPVALLRKQNFQPTAQQQLTNPAKITCANCKKPLQKGQTAYQRKGSAHLFCCTTCLSSFSHKRTQNTRSVICKKFASTKKADVVLPVESSRSFQEFCSTSCVSPCENNRNLKKGVFNKSRCTICSKLAEIRHEVSVNNVTHKLCSNHCFNKYRLANGLIMNCCEHCGEYMPSKSTGNNILVIGGQQKRFCCQSCINEYKQMMETKSKKLTASENRKRNAVREENEKQFCGLSSTLLKKIDGITEKKEKTSELHLSVECGTDTLLIKENVNLPPSSASAIADTFQEQLEEKNFEDSIVPVVLSADPGTWPRILNIKQRDTLVENVPPQVRNFNFPKDNTGRKFSETYYTRILPNGEKTTRSWLLYSTSKDSVFCLYCRLFGEGKNQLKNENGCKDWQHLSHILSKHEESEMHINNSVKYSKLKSDLKKNKAIDAAERRLYENEKNDGALLLYT.

Glycyl lysine isopeptide (Lys-Gly) (interchain with G-Cter in SUMO2) cross-links involve residues Lys-85, Lys-88, Lys-146, and Lys-163. Positions 87-106 are disordered; the sequence is EKPQGNYSVIPPPSRDLASQ. A disordered region spans residues 191 to 212; that stretch reads SPDSWISQSASFPRNQKQPGVD. Residues 194-208 are compositionally biased toward polar residues; that stretch reads SWISQSASFPRNQKQ. A Glycyl lysine isopeptide (Lys-Gly) (interchain with G-Cter in SUMO2) cross-link involves residue Lys-222. 4 consecutive MYM-type zinc fingers follow at residues 262-296, 308-348, 355-390, and 401-428; these read HLFC…KKAD, QEFC…RHEV, HKLC…KSTG, and KRFC…ASEN. Glycyl lysine isopeptide (Lys-Gly) (interchain with G-Cter in SUMO2) cross-links involve residues Lys-440, Lys-452, Lys-459, and Lys-549.

In terms of assembly, interacts (via N-terminal 120 amino acid region) with ETV5 (via C-terminal).

It is found in the nucleus. Functionally, functions as a transcriptional regulator. This is Zinc finger MYM-type protein 5 (ZMYM5) from Macaca fascicularis (Crab-eating macaque).